Reading from the N-terminus, the 160-residue chain is Cytochrome b6-f complex subunit 4 (160 aa).

Transmembrane regions (helical) follow at residues 36-56 (LLYIFPVVILGTIACNVGLAV), 95-115 (LLGVLLMVSVPTGLLTVPFLE), and 131-151 (TVFLIGTAVALWLGIGATLPI).

This sequence belongs to the cytochrome b family. PetD subfamily. The 4 large subunits of the cytochrome b6-f complex are cytochrome b6, subunit IV (17 kDa polypeptide, petD), cytochrome f and the Rieske protein, while the 4 small subunits are petG, petL, petM and petN. The complex functions as a dimer.

The protein resides in the plastid. Its subcellular location is the chloroplast thylakoid membrane. Its function is as follows. Component of the cytochrome b6-f complex, which mediates electron transfer between photosystem II (PSII) and photosystem I (PSI), cyclic electron flow around PSI, and state transitions. The chain is Cytochrome b6-f complex subunit 4 from Oryza sativa (Rice).